Reading from the N-terminus, the 324-residue chain is MKIVTYSKNVFIPLTRNCRNRCDYCGFRSEEIGVMSAEEVRKILSAARGAKEALFTFGERPDEVYPEFKAMLLEMGYKSMVDYILEMNKIAVEMGFLPHTNAGILSKEEMRKLKPYNASMGLMLEQAVELECHANSPGKKPEVRIKMIRDAGKLQIPFTTGILVGIGEGREDRLYSLEIIAEIQDNYGHIQEVIVQNFKPKKGTPMENTPPPTLEEMLEAVKAAREILPQEVAIQIPPNLVDDIYPFLKAGANDVGGISNVTHDYINPESPWPEVERLERALRGEFILKERLPIYPRFVKLKWYGEALEPLIEKYSDADGYARP.

A Radical SAM core domain is found at 4 to 239 (VTYSKNVFIP…QEVAIQIPPN (236 aa)). The [4Fe-4S] cluster site is built by cysteine 18, cysteine 22, and cysteine 25.

The protein belongs to the radical SAM superfamily. CofG family. Consists of two subunits, CofG and CofH. The cofactor is [4Fe-4S] cluster.

It carries out the reaction 5-amino-5-(4-hydroxybenzyl)-6-(D-ribitylimino)-5,6-dihydrouracil + S-adenosyl-L-methionine = 7,8-didemethyl-8-hydroxy-5-deazariboflavin + 5'-deoxyadenosine + L-methionine + NH4(+) + H(+). It functions in the pathway cofactor biosynthesis; coenzyme F0 biosynthesis. Catalyzes the radical-mediated synthesis of 7,8-didemethyl-8-hydroxy-5-deazariboflavin from 5-amino-5-(4-hydroxybenzyl)-6-(D-ribitylimino)-5,6-dihydrouracil. This chain is 7,8-didemethyl-8-hydroxy-5-deazariboflavin synthase, found in Archaeoglobus fulgidus (strain ATCC 49558 / DSM 4304 / JCM 9628 / NBRC 100126 / VC-16).